The primary structure comprises 459 residues: FBD-associated F-box protein At4g13985 (459 aa).

Positions 18-64 (VDRLRNLPDCLLFKILLNLPTKDVVKLSVLSRRWRNVWRYVPGLDLE) constitute an F-box domain. The region spanning 375-429 (KEGANILPGPRRFLTSLEYVKIAKPMAAEASEIKLKLVSYFLENSTILKKLTLCL) is the FBD domain.

The protein is FBD-associated F-box protein At4g13985 of Arabidopsis thaliana (Mouse-ear cress).